Consider the following 317-residue polypeptide: MKQFVRPEFILLKEGQDKNYGKFSVSPLERGFGITLGNAIRRTLLAATPGASVYAIKIAGATHEFTSIPGIIENVTKIILNIKQLVLRIDTSIYSDDEVVQLKIRSDIQGPVYAGDLELPAGVEVLNQDLLIATISEGGILDLVLYAKNSRGYKTFKDNKNEKNIEPGMITIDSNYSPIIKVAYSVDSAKIGRAIDLEKLELEVTTDGSITAIDAISIASKILVAHLEFFIDLNREISVLEVIGVNQTDDKELDRTVEELDFTQRSLNCLKRAGINTLRELVTKNEDEIGSIRNLGRKSLKEIKDKVASLGLAFRQS.

The tract at residues Met1–Asn234 is alpha N-terminal domain (alpha-NTD). The alpha C-terminal domain (alpha-CTD) stretch occupies residues Asp249 to Ser317.

Belongs to the RNA polymerase alpha chain family. As to quaternary structure, homodimer. The RNAP catalytic core consists of 2 alpha, 1 beta, 1 beta' and 1 omega subunit. When a sigma factor is associated with the core the holoenzyme is formed, which can initiate transcription.

The catalysed reaction is RNA(n) + a ribonucleoside 5'-triphosphate = RNA(n+1) + diphosphate. Functionally, DNA-dependent RNA polymerase catalyzes the transcription of DNA into RNA using the four ribonucleoside triphosphates as substrates. In Mycoplasma capricolum subsp. capricolum (strain California kid / ATCC 27343 / NCTC 10154), this protein is DNA-directed RNA polymerase subunit alpha.